The primary structure comprises 599 residues: Sulfite reductase [NADPH] flavoprotein alpha-component (599 aa).

Positions 64–202 (ITLISASQTG…AAAEWRARVV (139 aa)) constitute a Flavodoxin-like domain. Residues 70–75 (SQTGNA), 117–120 (STQG), and 153–162 (LGDTSYEFFC) contribute to the FMN site. The FAD-binding FR-type domain occupies 234–448 (EAPLTATLSV…IEHNDNFRLP (215 aa)). Residues Thr322, Ala356, 386–389 (RLYS), 404–406 (TVG), Tyr410, and 419–422 (GGAS) contribute to the FAD site. NADP(+) contacts are provided by residues 519-520 (SR), 525-529 (KIYVQ), and Asp561. An FAD-binding site is contributed by Tyr599.

This sequence belongs to the NADPH-dependent sulphite reductase flavoprotein subunit CysJ family. It in the N-terminal section; belongs to the flavodoxin family. The protein in the C-terminal section; belongs to the flavoprotein pyridine nucleotide cytochrome reductase family. As to quaternary structure, alpha(8)-beta(8). The alpha component is a flavoprotein, the beta component is a hemoprotein. FAD serves as cofactor. FMN is required as a cofactor.

The enzyme catalyses hydrogen sulfide + 3 NADP(+) + 3 H2O = sulfite + 3 NADPH + 4 H(+). It functions in the pathway sulfur metabolism; hydrogen sulfide biosynthesis; hydrogen sulfide from sulfite (NADPH route): step 1/1. In terms of biological role, component of the sulfite reductase complex that catalyzes the 6-electron reduction of sulfite to sulfide. This is one of several activities required for the biosynthesis of L-cysteine from sulfate. The flavoprotein component catalyzes the electron flow from NADPH -&gt; FAD -&gt; FMN to the hemoprotein component. This is Sulfite reductase [NADPH] flavoprotein alpha-component from Klebsiella pneumoniae subsp. pneumoniae (strain ATCC 700721 / MGH 78578).